A 422-amino-acid polypeptide reads, in one-letter code: Dihydroorotase (422 aa).

Zn(2+)-binding residues include His-59 and His-61. Substrate contacts are provided by residues 61 to 63 and Asn-93; that span reads HFR. Zn(2+) contacts are provided by Asp-150, His-177, and His-230. Residue Asn-276 coordinates substrate. Residue Asp-303 coordinates Zn(2+). Asp-303 is a catalytic residue. Residue His-307 coordinates substrate.

This sequence belongs to the metallo-dependent hydrolases superfamily. DHOase family. Class I DHOase subfamily. Zn(2+) serves as cofactor.

It carries out the reaction (S)-dihydroorotate + H2O = N-carbamoyl-L-aspartate + H(+). Its pathway is pyrimidine metabolism; UMP biosynthesis via de novo pathway; (S)-dihydroorotate from bicarbonate: step 3/3. In terms of biological role, catalyzes the reversible cyclization of carbamoyl aspartate to dihydroorotate. The protein is Dihydroorotase of Streptococcus pyogenes serotype M1.